The sequence spans 336 residues: Effector SCP41 (336 aa).

A signal peptide spans 1-19; it reads MRTETASLLLLAALSVAEE. 2 disordered regions span residues 59–99 and 189–230; these read LFSP…STNN and PVGN…GQKG. A compositionally biased stretch (low complexity) spans 63–74; sequence QQQQQQQQQQQQ.

In terms of assembly, interacts with A.thaliana CBP60G; the interaction is direct. Interacts with A.thaliana SARD1. Interacts with G.hirsutum CBP60B.

The protein resides in the secreted. It is found in the host nucleus. Effector that binds transcription regulators in the host plant to suppress the host's innate immune response. Inhibits the host plant transcription regulators CBP60G and SARD1. The chain is Effector SCP41 from Verticillium dahliae (strain VdLs.17 / ATCC MYA-4575 / FGSC 10137) (Verticillium wilt).